The chain runs to 304 residues: Large ribosomal subunit protein uL2m (304 aa).

The transit peptide at 1-60 directs the protein to the mitochondrion; the sequence is MALCALASALRSLSLASPAITARVPTLLPVGQSNVLLQLPSALALPAHRPVHMSADRSAK.

It belongs to the universal ribosomal protein uL2 family. In terms of assembly, component of the mitochondrial ribosome large subunit (39S) which comprises a 16S rRNA and about 50 distinct proteins.

The protein localises to the mitochondrion. This Rattus norvegicus (Rat) protein is Large ribosomal subunit protein uL2m (Mrpl2).